The primary structure comprises 221 residues: Immediate early response gene 2 protein (221 aa).

An N-acetylmethionine modification is found at Met-1. Residues 105–155 are disordered; sequence ETPALCDPPPARVSRKRRSSSDLSDGSDAGLVPSKKARLEEVEGEATSEVP. A compositionally biased stretch (low complexity) spans 125–136; that stretch reads SDLSDGSDAGLV.

This sequence belongs to the IER family.

It is found in the cytoplasm. The protein resides in the nucleus. Its function is as follows. DNA-binding protein that seems to act as a transcription factor. Involved in the regulation of neuronal differentiation, acts upon JNK-signaling pathway activation and plays a role in neurite outgrowth in hippocampal cells. May mediate with FIBP FGF-signaling in the establishment of laterality in the embryo. Promotes cell motility, seems to stimulate tumor metastasis. This is Immediate early response gene 2 protein (Ier2) from Mus musculus (Mouse).